We begin with the raw amino-acid sequence, 254 residues long: Uracil-DNA glycosylase (254 aa).

D91 functions as the Proton acceptor in the catalytic mechanism.

It belongs to the uracil-DNA glycosylase (UDG) superfamily. UNG family.

The protein localises to the host nucleus. The catalysed reaction is Hydrolyzes single-stranded DNA or mismatched double-stranded DNA and polynucleotides, releasing free uracil.. Functionally, excises uracil residues from the DNA which can arise as a result of misincorporation of dUMP residues by DNA polymerase or deamination of cytosines. Therefore may reduce deleterious uracil incorporation into the viral genome, particularly in terminally differentiated cells which lack DNA repair enzymes. This is Uracil-DNA glycosylase (U81) from Homo sapiens (Human).